The chain runs to 156 residues: Small ribosomal subunit protein uS7c (156 aa).

The protein belongs to the universal ribosomal protein uS7 family. Part of the 30S ribosomal subunit.

It localises to the plastid. It is found in the chloroplast. Its function is as follows. One of the primary rRNA binding proteins, it binds directly to 16S rRNA where it nucleates assembly of the head domain of the 30S subunit. In Zamia furfuracea (Cardboard cycad), this protein is Small ribosomal subunit protein uS7c (rps7).